We begin with the raw amino-acid sequence, 732 residues long: Polyribonucleotide nucleotidyltransferase (732 aa).

Positions 489 and 495 each coordinate Mg(2+). Residues 556-615 form the KH domain; the sequence is PKIDTIQIDVDKIKIVIGKGGETIDKIIAETGVKIDIDEEGLVQIFSSDQAAIDRTKEII. The 69-residue stretch at 625–693 folds into the S1 motif domain; it reads GEVYHAKVVR…DKGRVDASMK (69 aa). The disordered stretch occupies residues 691–732; it reads SMKALIPRPPKPEKKEEKASEAKEASNDQASKSQSETASEEK. Positions 700 to 716 are enriched in basic and acidic residues; it reads PKPEKKEEKASEAKEAS. Polar residues predominate over residues 717-732; the sequence is NDQASKSQSETASEEK.

The protein belongs to the polyribonucleotide nucleotidyltransferase family. Mg(2+) is required as a cofactor.

It localises to the cytoplasm. It catalyses the reaction RNA(n+1) + phosphate = RNA(n) + a ribonucleoside 5'-diphosphate. Its function is as follows. Involved in mRNA degradation. Catalyzes the phosphorolysis of single-stranded polyribonucleotides processively in the 3'- to 5'-direction. This chain is Polyribonucleotide nucleotidyltransferase, found in Streptococcus uberis (strain ATCC BAA-854 / 0140J).